Consider the following 324-residue polypeptide: Malate dehydrogenase (324 aa).

NAD(+) contacts are provided by residues 20–25 and D44; that span reads GAGNVG. Substrate-binding residues include R93 and R99. NAD(+) contacts are provided by residues N106 and 129–131; that span reads VTN. Residues N131 and R162 each contribute to the substrate site. The active-site Proton acceptor is the H186.

The protein belongs to the LDH/MDH superfamily. MDH type 3 family.

The catalysed reaction is (S)-malate + NAD(+) = oxaloacetate + NADH + H(+). In terms of biological role, catalyzes the reversible oxidation of malate to oxaloacetate. This is Malate dehydrogenase from Synechocystis sp. (strain ATCC 27184 / PCC 6803 / Kazusa).